The following is a 352-amino-acid chain: Heat-inducible transcription repressor HrcA (352 aa).

Belongs to the HrcA family.

Functionally, negative regulator of class I heat shock genes (grpE-dnaK-dnaJ and groELS operons). Prevents heat-shock induction of these operons. This is Heat-inducible transcription repressor HrcA from Latilactobacillus sakei subsp. sakei (strain 23K) (Lactobacillus sakei subsp. sakei).